Reading from the N-terminus, the 471-residue chain is Tryptophanase (471 aa).

Residues Lys-5, Lys-115, and Lys-156 each carry the N6-acetyllysine modification. Lys-270 is subject to N6-(pyridoxal phosphate)lysine. N6-acetyllysine is present on Lys-450.

It belongs to the beta-eliminating lyase family. Homotetramer. Requires pyridoxal 5'-phosphate as cofactor.

The catalysed reaction is L-tryptophan + H2O = indole + pyruvate + NH4(+). Its pathway is amino-acid degradation; L-tryptophan degradation via pyruvate pathway; indole and pyruvate from L-tryptophan: step 1/1. The chain is Tryptophanase (tnaA) from Escherichia coli O157:H7.